Consider the following 2255-residue polypeptide: Non-reducing polyketide synthase nvfA (2255 aa).

The interval 13 to 251 (ILFGPQSSDM…HHPDHTAAVE (239 aa)) is N-terminal acylcarrier protein transacylase domain (SAT). The Ketosynthase family 3 (KS3) domain maps to 365 to 781 (VRPIAVTGMA…GSNAAIVLRQ (417 aa)). Active-site for beta-ketoacyl synthase activity residues include cysteine 530, histidine 665, and histidine 704. Positions 887–1187 (LCFGGQNGNT…QASDLKSPQA (301 aa)) are malonyl-CoA:ACP transacylase (MAT) domain. The For acyl/malonyl transferase activity role is filled by serine 974. Positions 1229–1357 (EPMGLVQVLE…GRISLHPFDS (129 aa)) are N-terminal hotdog fold. A PKS/mFAS DH domain is found at 1229-1536 (EPMGLVQVLE…FTSVSIRALT (308 aa)). Positions 1232–1535 (GLVQVLEKRP…TFTSVSIRAL (304 aa)) are product template (PT) domain. Residue histidine 1262 is the Proton acceptor; for dehydratase activity of the active site. Residues 1385-1536 (SSSGLKGSAV…FTSVSIRALT (152 aa)) form a C-terminal hotdog fold region. Residue aspartate 1443 is the Proton donor; for dehydratase activity of the active site. A Carrier domain is found at 1581-1655 (TNKFPAIQAM…CLVQAIFPGA (75 aa)). Serine 1615 bears the O-(pantetheine 4'-phosphoryl)serine mark. Positions 1809–2042 (HHASEHTLLR…GYNWVNWSCN (234 aa)) are methyltransferase (CMeT) domain. The interval 2109 to 2227 (LLIHGGGHVM…ILSFYCPTDY (119 aa)) is thioesterase (TE) domain. The active-site For thioesterase activity is serine 2194.

It catalyses the reaction 3 malonyl-CoA + acetyl-CoA + 2 S-adenosyl-L-methionine = 3,5-dimethylorsellinate + 2 S-adenosyl-L-homocysteine + 3 CO2 + 4 CoA. Its pathway is secondary metabolite biosynthesis; terpenoid biosynthesis. Its function is as follows. Non-reducing polyketide synthase; part of the gene cluster that mediates the biosynthesis of novofumigatonin, a heavily oxygenated meroterpenoid containing a unique orthoester moiety. The first step of the pathway is the synthesis of 3,5-dimethylorsellinic acid (DMOA) by the polyketide synthase nvfA via condensation of one acetyl-CoA starter unit with 3 malonyl-CoA units and 2 methylations. DMOA is then converted to farnesyl-DMOA by the farnesyltransferase nvfB. Epoxydation by FAD-dependent monooxygenase nvfK, followed by a protonation-initiated cyclization catalyzed by the terpene cyclase nvfL leads to the production of asnavolin H. The short chain dehydrogenase nvfC then as a 3-OH dehydrogenase of asnovolin H to yield chemesin D. There are two branches to synthesize asnovolin A from chemesin D. In one branch, chemesin D undergoes Baeyer-Villiger oxidation by nvfH, methylation by nvfJ, and enoyl reduction by the nvfM D enoylreductase that reduces the double bond between C-5'and C-6', to form respectively asnovolin I, asnovolin K, and asnovolin A. In the other branch, the methylation precedes the Baeyer-Villiger oxidation and the enoyl reduction to yield asnovolin A via the asnovolin J intermediate. Asnovolin A is further converted to fumigatonoid A by the Fe(II)/2-oxoglutarate-dependent dioxygenase nvfI that catalyzes an endoperoxidation reaction. The alpha/beta hydrolase nvfD then acts as an epimerase that converts fumigatonoid A to its C-5' epimer, which then undergoes spontaneous or nvfD-catalyzed lactonization. The following step utilizes the ketoreductase nvfG to produce fumigatonoid B. The dioxygenase nvfE further converts fumigatonoid B into fumigatonoid C. Finally the Fe(II)/2-oxoglutarate-dependent dioxygenase nvfF catalyzes two rounds of oxidation to transform fumigatonoid C into the end product, novofumigatonin A. In Aspergillus novofumigatus (strain IBT 16806), this protein is Non-reducing polyketide synthase nvfA.